The primary structure comprises 209 residues: Probable E3 ubiquitin-protein ligase NleG7 (209 aa).

Belongs to the NleG E3 ligase family. Two sizes of protein are detected in situ; only the smaller protein is secreted.

It is found in the secreted. Its subcellular location is the host cytoplasm. It carries out the reaction S-ubiquitinyl-[E2 ubiquitin-conjugating enzyme]-L-cysteine + [acceptor protein]-L-lysine = [E2 ubiquitin-conjugating enzyme]-L-cysteine + N(6)-ubiquitinyl-[acceptor protein]-L-lysine.. Its function is as follows. Effector proteins function to alter host cell physiology and promote bacterial survival in host tissues. This protein is probably an E3 ubiquitin-protein ligase that interferes with the host's ubiquitination pathway and targets host proteins for proteasomal degradation. Mice infected with a strain of bacteria deleted for this gene were colonized less quickly by bacteria. The polypeptide is Probable E3 ubiquitin-protein ligase NleG7 (Citrobacter rodentium).